Consider the following 327-residue polypeptide: Aspartate carbamoyltransferase catalytic subunit (327 aa).

Residues R54 and T55 each coordinate carbamoyl phosphate. K82 is an L-aspartate binding site. The carbamoyl phosphate site is built by R104, H134, and Q137. L-aspartate contacts are provided by R177 and R232. The carbamoyl phosphate site is built by G280 and P281.

The protein belongs to the aspartate/ornithine carbamoyltransferase superfamily. ATCase family. In terms of assembly, heterododecamer (2C3:3R2) of six catalytic PyrB chains organized as two trimers (C3), and six regulatory PyrI chains organized as three dimers (R2).

The enzyme catalyses carbamoyl phosphate + L-aspartate = N-carbamoyl-L-aspartate + phosphate + H(+). The protein operates within pyrimidine metabolism; UMP biosynthesis via de novo pathway; (S)-dihydroorotate from bicarbonate: step 2/3. Functionally, catalyzes the condensation of carbamoyl phosphate and aspartate to form carbamoyl aspartate and inorganic phosphate, the committed step in the de novo pyrimidine nucleotide biosynthesis pathway. The polypeptide is Aspartate carbamoyltransferase catalytic subunit (Micrococcus luteus (strain ATCC 4698 / DSM 20030 / JCM 1464 / CCM 169 / CCUG 5858 / IAM 1056 / NBRC 3333 / NCIMB 9278 / NCTC 2665 / VKM Ac-2230) (Micrococcus lysodeikticus)).